A 748-amino-acid chain; its full sequence is Catalase-peroxidase 2 (748 aa).

Polar residues predominate over residues 1–24 (MSSDTSDSRPPNPDTKTASTSESE). The interval 1–43 (MSSDTSDSRPPNPDTKTASTSESENPAIPSPKPKSGAPLRNQD) is disordered. The segment at residues 113–238 (WHSAGTYRIH…YGATTMGLIY (126 aa)) is a cross-link (tryptophyl-tyrosyl-methioninium (Trp-Tyr) (with M-264)). Residue His114 is the Proton acceptor of the active site. Residues 238–264 (YVNPEGPEGQPDPLAAAHDIRETFGRM) constitute a cross-link (tryptophyl-tyrosyl-methioninium (Tyr-Met) (with W-113)). His279 serves as a coordination point for heme b.

This sequence belongs to the peroxidase family. Peroxidase/catalase subfamily. Homotetramer. The cofactor is heme b. Formation of the three residue Trp-Tyr-Met cross-link is important for the catalase, but not the peroxidase activity of the enzyme.

The catalysed reaction is H2O2 + AH2 = A + 2 H2O. It catalyses the reaction 2 H2O2 = O2 + 2 H2O. Bifunctional enzyme with both catalase and broad-spectrum peroxidase activity. May play a role in the intracellular survival of mycobacteria. This is Catalase-peroxidase 2 from Mycolicibacterium smegmatis (strain ATCC 700084 / mc(2)155) (Mycobacterium smegmatis).